We begin with the raw amino-acid sequence, 82 residues long: M-zodatoxin-Lt3b (82 aa).

Positions Met1–Gly22 are cleaved as a signal peptide. Residues Tyr23–Arg61 constitute a propeptide that is removed on maturation. The short motif at Glu58–Arg61 is the Processing quadruplet motif element. Ala81 carries the alanine amide modification.

Cleavage of the propeptide depends on the processing quadruplet motif (XXXR, with at least one of X being E). Expressed by the venom gland.

It is found in the secreted. It has antimicrobial activity against Gram-positive bacteria (A.globiformis VKM Ac-1112 (MIC=0.7 uM), and B.subtilis VKM B-501 (MIC=2.9 uM)), Gram-negative bacteria (E.coli DH5-alpha (MIC=23 uM), E.coli MH1 (MIC=28 uM), and P.aeruginosa PAO1 (MIC&gt;45 uM)), and yeasts (P.pastoris GS115 (MIC=23 uM), and S.cerevisiae Y190 (MIC=23 uM)). Does not have hemolytic against rabbit erythrocytes. Causes paralysis, but is not lethal when injected into insect (M.domestica) larvae. This Lachesana tarabaevi (Spider) protein is M-zodatoxin-Lt3b.